The chain runs to 172 residues: Large ribosomal subunit protein uL10 (172 aa).

The protein belongs to the universal ribosomal protein uL10 family. As to quaternary structure, part of the ribosomal stalk of the 50S ribosomal subunit. The N-terminus interacts with L11 and the large rRNA to form the base of the stalk. The C-terminus forms an elongated spine to which L12 dimers bind in a sequential fashion forming a multimeric L10(L12)X complex.

Forms part of the ribosomal stalk, playing a central role in the interaction of the ribosome with GTP-bound translation factors. This chain is Large ribosomal subunit protein uL10, found in Rhizobium leguminosarum bv. trifolii (strain WSM2304).